The primary structure comprises 457 residues: Serine--tRNA ligase (457 aa).

L-serine is bound at residue 252–254 (TAE). ATP-binding positions include 283 to 285 (RKE) and valine 299. Position 306 (glutamate 306) interacts with L-serine. 370 to 373 (EMVS) contributes to the ATP binding site. Threonine 406 is a binding site for L-serine.

This sequence belongs to the class-II aminoacyl-tRNA synthetase family. Type-1 seryl-tRNA synthetase subfamily. As to quaternary structure, homodimer. The tRNA molecule binds across the dimer.

It localises to the cytoplasm. It carries out the reaction tRNA(Ser) + L-serine + ATP = L-seryl-tRNA(Ser) + AMP + diphosphate + H(+). The catalysed reaction is tRNA(Sec) + L-serine + ATP = L-seryl-tRNA(Sec) + AMP + diphosphate + H(+). Its pathway is aminoacyl-tRNA biosynthesis; selenocysteinyl-tRNA(Sec) biosynthesis; L-seryl-tRNA(Sec) from L-serine and tRNA(Sec): step 1/1. Functionally, catalyzes the attachment of serine to tRNA(Ser). Is also able to aminoacylate tRNA(Sec) with serine, to form the misacylated tRNA L-seryl-tRNA(Sec), which will be further converted into selenocysteinyl-tRNA(Sec). The protein is Serine--tRNA ligase of Saccharolobus islandicus (strain M.14.25 / Kamchatka #1) (Sulfolobus islandicus).